Reading from the N-terminus, the 156-residue chain is 6,7-dimethyl-8-ribityllumazine synthase (156 aa).

Residues phenylalanine 23, 57–59 (AFE), and 81–83 (TVI) contribute to the 5-amino-6-(D-ribitylamino)uracil site. 86 to 87 (ST) contacts (2S)-2-hydroxy-3-oxobutyl phosphate. Histidine 89 (proton donor) is an active-site residue. A 5-amino-6-(D-ribitylamino)uracil-binding site is contributed by phenylalanine 114. Arginine 128 is a (2S)-2-hydroxy-3-oxobutyl phosphate binding site.

Belongs to the DMRL synthase family. In terms of assembly, forms an icosahedral capsid composed of 60 subunits, arranged as a dodecamer of pentamers.

It carries out the reaction (2S)-2-hydroxy-3-oxobutyl phosphate + 5-amino-6-(D-ribitylamino)uracil = 6,7-dimethyl-8-(1-D-ribityl)lumazine + phosphate + 2 H2O + H(+). The protein operates within cofactor biosynthesis; riboflavin biosynthesis; riboflavin from 2-hydroxy-3-oxobutyl phosphate and 5-amino-6-(D-ribitylamino)uracil: step 1/2. Its function is as follows. Catalyzes the formation of 6,7-dimethyl-8-ribityllumazine by condensation of 5-amino-6-(D-ribitylamino)uracil with 3,4-dihydroxy-2-butanone 4-phosphate. This is the penultimate step in the biosynthesis of riboflavin. The chain is 6,7-dimethyl-8-ribityllumazine synthase from Shouchella clausii (strain KSM-K16) (Alkalihalobacillus clausii).